Consider the following 375-residue polypeptide: DNA replication and repair protein RecF (375 aa).

ATP is bound at residue 30-37 (GENAQGKT).

It belongs to the RecF family.

Its subcellular location is the cytoplasm. The RecF protein is involved in DNA metabolism; it is required for DNA replication and normal SOS inducibility. RecF binds preferentially to single-stranded, linear DNA. It also seems to bind ATP. This is DNA replication and repair protein RecF from Bacillus cereus (strain ZK / E33L).